Reading from the N-terminus, the 443-residue chain is MVVTRFAPSPTGRLHVGNIRTALHNWMWARAHGGRFLLRLDDTDLERSTEENAASIRADLGWLGLHPDAEAKQSDRFALYESRFEELRAQGRVYPCYESAEELELKRKILAGRGLPPIYDRAALALSDAERTAYEAEGRRPHWRFLLDHESPIAWTDLIRGPQHLDPRLLSDPVVRRADGSWLYMLPSVIDDIAMGVTHVVRGEDHVTNTGLQLQMFAALGAPEPAFAHEALLVGSEGKLSKRLGSLGCDAFRDEGIEPVALIALLARIGTSLPVEPVADPAALFDGFDFARFGRAPARFDLDELKALNARIIHMLPYAAVAGRLPAGMDAAGWEAIRPNLTRVDEAAGWWAVVEGAVSAAIAPEDRAYLAQAADAAAAIDWNEGAWKALTAALGAATGRKGKALFLPLRLALTGREHGPDMNALLPLIGKARAVERLRAAAS.

A 'HIGH' region motif is present at residues 8–18 (PSPTGRLHVGN). The 'KMSKS' region motif lies at 239 to 243 (KLSKR). Lysine 242 is a binding site for ATP.

The protein belongs to the class-I aminoacyl-tRNA synthetase family. Glutamate--tRNA ligase type 1 subfamily. In terms of assembly, monomer.

The protein localises to the cytoplasm. The catalysed reaction is tRNA(Glu) + L-glutamate + ATP = L-glutamyl-tRNA(Glu) + AMP + diphosphate. In terms of biological role, catalyzes the attachment of glutamate to tRNA(Glu) in a two-step reaction: glutamate is first activated by ATP to form Glu-AMP and then transferred to the acceptor end of tRNA(Glu). The protein is Glutamate--tRNA ligase 1 of Rhizorhabdus wittichii (strain DSM 6014 / CCUG 31198 / JCM 15750 / NBRC 105917 / EY 4224 / RW1) (Sphingomonas wittichii).